The primary structure comprises 159 residues: Ribosomal RNA large subunit methyltransferase H (159 aa).

S-adenosyl-L-methionine contacts are provided by residues leucine 76, glycine 108, and 127 to 132 (FSRMTF).

The protein belongs to the RNA methyltransferase RlmH family. Homodimer.

The protein resides in the cytoplasm. It carries out the reaction pseudouridine(1915) in 23S rRNA + S-adenosyl-L-methionine = N(3)-methylpseudouridine(1915) in 23S rRNA + S-adenosyl-L-homocysteine + H(+). In terms of biological role, specifically methylates the pseudouridine at position 1915 (m3Psi1915) in 23S rRNA. This is Ribosomal RNA large subunit methyltransferase H from Clostridioides difficile (strain 630) (Peptoclostridium difficile).